The following is a 745-amino-acid chain: Cytoplasmic polyadenylation element-binding protein 3 (745 aa).

3 disordered regions span residues 1–45 (MNLN…KSPT), 94–180 (VGSK…TNNS), and 204–283 (NKAN…FGEL). The segment covering 162–175 (LNFERDAEQKKDST) has biased composition (basic and acidic residues). Polar residues predominate over residues 219-229 (ETPTDSPQKGF). A compositionally biased stretch (low complexity) spans 230–240 (SSSTESSPSDS). The segment covering 241-255 (MNQFPSREHFTSANE) has biased composition (polar residues). A compositionally biased stretch (basic and acidic residues) spans 264-276 (FQQEHGNKNRDSD). Residues 297–319 (IFVGGVPWDITEAALKDSFGEFG) form the RRM domain.

In terms of biological role, cytoplasmic polyadenylation element binding protein that binds to and regulates the translation of specific mRNAs. May not be required for oogenesis. This Caenorhabditis elegans protein is Cytoplasmic polyadenylation element-binding protein 3 (cpb-3).